A 414-amino-acid chain; its full sequence is BICD family-like cargo adapter 2 (414 aa).

A coiled-coil region spans residues 34 to 341 (GQALLEKNEE…DALNQQLLNT (308 aa)). A compositionally biased stretch (basic and acidic residues) spans 372–384 (QEKEKENNKERTG). The tract at residues 372 to 399 (QEKEKENNKERTGFQRGTRTTKSLRLRG) is disordered.

This Danio rerio (Zebrafish) protein is BICD family-like cargo adapter 2 (bicdl2).